Here is a 340-residue protein sequence, read N- to C-terminus: UDP-3-O-acylglucosamine N-acyltransferase (340 aa).

H238 acts as the Proton acceptor in catalysis.

This sequence belongs to the transferase hexapeptide repeat family. LpxD subfamily. In terms of assembly, homotrimer.

It catalyses the reaction a UDP-3-O-[(3R)-3-hydroxyacyl]-alpha-D-glucosamine + a (3R)-hydroxyacyl-[ACP] = a UDP-2-N,3-O-bis[(3R)-3-hydroxyacyl]-alpha-D-glucosamine + holo-[ACP] + H(+). The protein operates within bacterial outer membrane biogenesis; LPS lipid A biosynthesis. Its function is as follows. Catalyzes the N-acylation of UDP-3-O-acylglucosamine using 3-hydroxyacyl-ACP as the acyl donor. Is involved in the biosynthesis of lipid A, a phosphorylated glycolipid that anchors the lipopolysaccharide to the outer membrane of the cell. This is UDP-3-O-acylglucosamine N-acyltransferase from Shewanella denitrificans (strain OS217 / ATCC BAA-1090 / DSM 15013).